Reading from the N-terminus, the 338-residue chain is Starch-binding domain-containing protein 1 (338 aa).

Over 1 to 6 the chain is Extracellular; sequence MGAVWS. A helical membrane pass occupies residues 7–23; it reads ALLVGGGLAGALILWLL. Residues 24-338 lie on the Cytoplasmic side of the membrane; that stretch reads RGDSGAPGKD…KVVHGWWGIH (315 aa). Disordered stretches follow at residues 30–73 and 120–148; these read PGKD…RELV and KIPDTHSRADSEAARNQSPGSHGGEWRLP. Positions 36–52 are enriched in low complexity; sequence AEPPQKGAPPGEAAAPG. Positions 53–62 are enriched in gly residues; it reads DGPGGGGSGG. S68 bears the Phosphoserine mark. A compositionally biased stretch (basic and acidic residues) spans 122-132; it reads PDTHSRADSEA. Residues S140, S167, and S179 each carry the phosphoserine modification. The LIR motif lies at 185–191; it reads HEDWEVV. Phosphoserine is present on residues S195, S196, S205, S209, S212, S220, and S223. Positions 238–337 constitute a CBM20 domain; sequence SLKPQQVSIQ…DKVVHGWWGI (100 aa).

In terms of assembly, interacts with the ATG8 family proteins GABARAP and GABARAPL1. Interacts with several glycogen-associated proteins, such as GYS2 (liver glycogen synthase), GDE (glycogen debranching enzyme), GBE1 (glycogen branching enzyme 1) and EPM2A (Laforin). Post-translationally, ubiquitinated, which leads to proteasomal degradation. In terms of tissue distribution, expressed at high level in glycogen-accumulating organs such as muscle and liver. Trace signals are also found in brain, kidney, and pancreas.

It is found in the preautophagosomal structure membrane. It localises to the endoplasmic reticulum membrane. Its subcellular location is the cell membrane. The protein localises to the sarcolemma. The protein resides in the T-tubule. Acts as a cargo receptor for glycogen. Delivers its cargo to an autophagic pathway called glycophagy, resulting in the transport of glycogen to lysosomes. The protein is Starch-binding domain-containing protein 1 of Mus musculus (Mouse).